The following is a 255-amino-acid chain: Endonuclease V (255 aa).

Residues aspartate 42 and aspartate 110 each contribute to the Mg(2+) site.

It belongs to the endonuclease V family. Mg(2+) serves as cofactor.

The protein localises to the cytoplasm. The enzyme catalyses Endonucleolytic cleavage at apurinic or apyrimidinic sites to products with a 5'-phosphate.. Functionally, DNA repair enzyme involved in the repair of deaminated bases. Selectively cleaves double-stranded DNA at the second phosphodiester bond 3' to a deoxyinosine leaving behind the intact lesion on the nicked DNA. The protein is Endonuclease V of Aeropyrum pernix (strain ATCC 700893 / DSM 11879 / JCM 9820 / NBRC 100138 / K1).